We begin with the raw amino-acid sequence, 392 residues long: MKPTGRGYLLLDAHPVGCFRSVELMRAEVPVPEKPPARRPTALVIGSSSGYGLASTIAGLVRYGIDGVGIGLERPAGHRSATAGWYRTVATDAIARELGADFSFRNADAFADTTKTETLDLLAERFGGVDYLIYSVAAPRRTDPRSGTTYQSVLKPLGAPHTTRNLEFADDGAAQVREVTVAPATEAEAAATVGVMGGEDWSRWITALAERGLLRSGFRTVALTYIGSPLTSAIYRGGTIGAAKAHLESTARALTERLAAVDGRAFTSVNGALVTQALTAIPGIPLYVSLLRGVLGDRFPSPVAQSLDLWHQLTARRPDVDDSGRIRLDRWELSEPVQAAVAERWRSITPETVTALADTAWFRAQCRALYGFDVPGVDYTVPVATDLPWPES.

Residues 46–51 (GSSSGY), 72–73 (LE), 108–109 (DA), and 136–137 (VA) each bind NAD(+). Tyr-225 provides a ligand contact to substrate. The active-site Proton donor is the Tyr-235. Residues Lys-244 and 273-275 (LVT) contribute to the NAD(+) site.

The protein belongs to the TER reductase family. Monomer.

The catalysed reaction is a 2,3-saturated acyl-[ACP] + NAD(+) = a (2E)-enoyl-[ACP] + NADH + H(+). It participates in lipid metabolism; fatty acid biosynthesis. Involved in the final reduction of the elongation cycle of fatty acid synthesis (FAS II). Catalyzes the reduction of a carbon-carbon double bond in an enoyl moiety that is covalently linked to an acyl carrier protein (ACP). The chain is Enoyl-[acyl-carrier-protein] reductase [NADH] from Streptomyces avermitilis (strain ATCC 31267 / DSM 46492 / JCM 5070 / NBRC 14893 / NCIMB 12804 / NRRL 8165 / MA-4680).